Here is a 453-residue protein sequence, read N- to C-terminus: UDP-N-acetylmuramoylalanine--D-glutamate ligase (453 aa).

Residue 120-126 participates in ATP binding; that stretch reads GSNGKST.

It belongs to the MurCDEF family.

It localises to the cytoplasm. It catalyses the reaction UDP-N-acetyl-alpha-D-muramoyl-L-alanine + D-glutamate + ATP = UDP-N-acetyl-alpha-D-muramoyl-L-alanyl-D-glutamate + ADP + phosphate + H(+). Its pathway is cell wall biogenesis; peptidoglycan biosynthesis. Cell wall formation. Catalyzes the addition of glutamate to the nucleotide precursor UDP-N-acetylmuramoyl-L-alanine (UMA). This is UDP-N-acetylmuramoylalanine--D-glutamate ligase from Teredinibacter turnerae (strain ATCC 39867 / T7901).